We begin with the raw amino-acid sequence, 1088 residues long: Protein unc-13 homolog D (1088 aa).

Positions 26–46 are disordered; that stretch reads VRDLQDPPPQATPEVQVQSHH. One can recognise a C2 1 domain in the interval 92 to 239; that stretch reads QPEEHQQMLQ…FKEARKDKGQ (148 aa). Ca(2+)-binding residues include Asp-127 and Asp-133. Ser-150 carries the phosphoserine modification. Residues Asp-206 and Asp-208 each coordinate Ca(2+). The tract at residues 240–543 is interaction with RAB27A; it reads DDFLGNVMLR…AKRVQDHTAA (304 aa). One can recognise an MHD1 domain in the interval 557-675; it reads FQLYVSLREF…RLALVYCSLI (119 aa). One can recognise an MHD2 domain in the interval 786–893; it reads EDAILPLMKF…ASSRELIQKY (108 aa). In terms of domain architecture, C2 2 spans 908–1033; sequence RLGAVTVKAS…PGLTGCVEPG (126 aa). Ca(2+) contacts are provided by Leu-938, Asp-939, Asp-945, Asp-1003, Asp-1005, and Asp-1011.

This sequence belongs to the unc-13 family. In terms of assembly, interacts with RAB27A and DOC2A. Interacts with RhoG; the interaction increases RhoG affinity to the membrane lipids, targets Unc13d to membrane lipids and facilitates cytotoxic granule (CG) docking to the plasma membrane. Ca(2+) serves as cofactor. Expressed in lung bronchial epithelium goblet/mucous cells. Also expressed in spleen and testis. Expressed at very low levels in heart muscle, kidney, liver, brain and skeletal muscle.

It localises to the cytoplasm. The protein localises to the membrane. The protein resides in the late endosome. Its subcellular location is the recycling endosome. It is found in the lysosome. Its function is as follows. Plays a role in cytotoxic granule exocytosis in lymphocytes. Required for both granule maturation and granule docking and priming at the immunologic synapse. Regulates assembly of recycling and late endosomal structures, leading to the formation of an endosomal exocytic compartment that fuses with perforin-containing granules at the immunologic synapse and licences them for exocytosis. Regulates Ca(2+)-dependent secretory lysosome exocytosis in mast cells. This Rattus norvegicus (Rat) protein is Protein unc-13 homolog D (Unc13d).